The primary structure comprises 162 residues: NADH-quinone oxidoreductase subunit I (162 aa).

2 4Fe-4S ferredoxin-type domains span residues 52–82 (LRRYPNGEERCIACKLCEAVCPAQAITIEAG) and 93–122 (VRYDIDMVKCIYCGLCQEACPVDAIVEGPN). Residues C62, C65, C68, C72, C102, C105, C108, and C112 each contribute to the [4Fe-4S] cluster site.

This sequence belongs to the complex I 23 kDa subunit family. As to quaternary structure, NDH-1 is composed of 14 different subunits. Subunits NuoA, H, J, K, L, M, N constitute the membrane sector of the complex. It depends on [4Fe-4S] cluster as a cofactor.

The protein resides in the cell inner membrane. The enzyme catalyses a quinone + NADH + 5 H(+)(in) = a quinol + NAD(+) + 4 H(+)(out). Its function is as follows. NDH-1 shuttles electrons from NADH, via FMN and iron-sulfur (Fe-S) centers, to quinones in the respiratory chain. The immediate electron acceptor for the enzyme in this species is believed to be ubiquinone. Couples the redox reaction to proton translocation (for every two electrons transferred, four hydrogen ions are translocated across the cytoplasmic membrane), and thus conserves the redox energy in a proton gradient. The chain is NADH-quinone oxidoreductase subunit I from Nitrobacter winogradskyi (strain ATCC 25391 / DSM 10237 / CIP 104748 / NCIMB 11846 / Nb-255).